Reading from the N-terminus, the 196-residue chain is Adenine phosphoribosyltransferase (196 aa).

The protein belongs to the purine/pyrimidine phosphoribosyltransferase family. In terms of assembly, homodimer.

It localises to the cytoplasm. It carries out the reaction AMP + diphosphate = 5-phospho-alpha-D-ribose 1-diphosphate + adenine. Its pathway is purine metabolism; AMP biosynthesis via salvage pathway; AMP from adenine: step 1/1. Functionally, catalyzes a salvage reaction resulting in the formation of AMP, that is energically less costly than de novo synthesis. This chain is Adenine phosphoribosyltransferase, found in Methylibium petroleiphilum (strain ATCC BAA-1232 / LMG 22953 / PM1).